Reading from the N-terminus, the 392-residue chain is Succinate--CoA ligase [ADP-forming] subunit beta (392 aa).

Positions 9–248 (KGILKQFGVA…ITEEDPLEYE (240 aa)) constitute an ATP-grasp domain. ATP contacts are provided by residues K50, 57–59 (GRG), E103, M106, and E111. Mg(2+) is bound by residues N203 and D217. Substrate contacts are provided by residues N268 and 325 to 327 (GIV).

This sequence belongs to the succinate/malate CoA ligase beta subunit family. As to quaternary structure, heterotetramer of two alpha and two beta subunits. Requires Mg(2+) as cofactor.

It carries out the reaction succinate + ATP + CoA = succinyl-CoA + ADP + phosphate. The enzyme catalyses GTP + succinate + CoA = succinyl-CoA + GDP + phosphate. Its pathway is carbohydrate metabolism; tricarboxylic acid cycle; succinate from succinyl-CoA (ligase route): step 1/1. Succinyl-CoA synthetase functions in the citric acid cycle (TCA), coupling the hydrolysis of succinyl-CoA to the synthesis of either ATP or GTP and thus represents the only step of substrate-level phosphorylation in the TCA. The beta subunit provides nucleotide specificity of the enzyme and binds the substrate succinate, while the binding sites for coenzyme A and phosphate are found in the alpha subunit. In Chlorobaculum parvum (strain DSM 263 / NCIMB 8327) (Chlorobium vibrioforme subsp. thiosulfatophilum), this protein is Succinate--CoA ligase [ADP-forming] subunit beta.